A 398-amino-acid polypeptide reads, in one-letter code: Phosphoglycerate kinase (398 aa).

Substrate contacts are provided by residues 21 to 23, Arg36, 59 to 62, Arg119, and Arg157; these read DFN and HLGR. Residues Lys208, Gly296, Glu327, and 354–357 each bind ATP; that span reads GGDS.

Belongs to the phosphoglycerate kinase family. Monomer.

It is found in the cytoplasm. The enzyme catalyses (2R)-3-phosphoglycerate + ATP = (2R)-3-phospho-glyceroyl phosphate + ADP. It functions in the pathway carbohydrate degradation; glycolysis; pyruvate from D-glyceraldehyde 3-phosphate: step 2/5. The protein is Phosphoglycerate kinase of Streptococcus pneumoniae (strain Taiwan19F-14).